The chain runs to 266 residues: ES1 protein homolog, mitochondrial (266 aa).

A mitochondrion-targeting transit peptide spans 1 to 39; sequence MAAVRVLVSPRLASALLPLSGRHRTTSQRAAIHSSAPRP. K149, K155, and K162 each carry N6-acetyllysine. K201 is modified (N6-acetyllysine; alternate). K201 bears the N6-succinyllysine; alternate mark. K217 carries the N6-acetyllysine modification. K221 and K231 each carry N6-acetyllysine; alternate. N6-succinyllysine; alternate is present on residues K221 and K231.

This sequence belongs to the ES1 family.

It localises to the mitochondrion. The polypeptide is ES1 protein homolog, mitochondrial (Rattus norvegicus (Rat)).